The primary structure comprises 297 residues: Esterase LipU (297 aa).

Catalysis depends on residues Ser140, Glu239, and His269.

Belongs to the 'GDXG' lipolytic enzyme family.

Its subcellular location is the secreted. The enzyme catalyses a fatty acid ester + H2O = an aliphatic alcohol + a fatty acid + H(+). It catalyses the reaction a butanoate ester + H2O = an aliphatic alcohol + butanoate + H(+). It carries out the reaction an acetyl ester + H2O = an aliphatic alcohol + acetate + H(+). The catalysed reaction is decanoate ester + H2O = decanoate + an aliphatic alcohol + H(+). The enzyme catalyses an octanoate ester + H2O = an aliphatic alcohol + octanoate + H(+). It catalyses the reaction a dodecanoate ester + H2O = an aliphatic alcohol + dodecanoate + H(+). It carries out the reaction hexadecanoate ester + H2O = an aliphatic alcohol + hexadecanoate + H(+). With respect to regulation, inhibited by the ionic detergent SDS and by the serine protease inhibitor PMSF. Inhibited by the FDA approved drugs Diosmin, Acarbose and Ouabain. These drugs remain bound in the active site pocket and could be probable drug candidates to combat TB disease. In terms of biological role, esterase that shows preference for short chain fatty acids. Contributes to the growth of M.tuberculosis during the nutritive stress. Elicits strong humoral response in both extrapulmonary and relapsed cases of tuberculosis patients. This is Esterase LipU from Mycobacterium tuberculosis (strain ATCC 25618 / H37Rv).